We begin with the raw amino-acid sequence, 63 residues long: MRIHYLLFSFLLVLLSPLSVFTQSINNPVSCVTHGGICWGRCPGSFRQIGTCGLGKVRCCKKK.

The N-terminal stretch at 1 to 22 (MRIHYLLFSFLLVLLSPLSVFT) is a signal peptide. A Pyrrolidone carboxylic acid modification is found at glutamine 23. 3 disulfide bridges follow: cysteine 31–cysteine 59, cysteine 38–cysteine 52, and cysteine 42–cysteine 60.

This sequence belongs to the beta-defensin family.

It localises to the secreted. In terms of biological role, has antibacterial activity. This chain is Beta-defensin 5 (Defb5), found in Rattus norvegicus (Rat).